Reading from the N-terminus, the 152-residue chain is UPF0178 protein Plav_1521 (152 aa).

The tract at residues 114–152 (LRETGQSKGGGPAFSKEDRSRFLRSLEDTVQAIRRRPPP) is disordered. The segment covering 128-140 (SKEDRSRFLRSLE) has biased composition (basic and acidic residues).

The protein belongs to the UPF0178 family.

The chain is UPF0178 protein Plav_1521 from Parvibaculum lavamentivorans (strain DS-1 / DSM 13023 / NCIMB 13966).